A 103-amino-acid chain; its full sequence is Large ribosomal subunit protein bL21 (103 aa).

Belongs to the bacterial ribosomal protein bL21 family. In terms of assembly, part of the 50S ribosomal subunit. Contacts protein L20.

This protein binds to 23S rRNA in the presence of protein L20. The polypeptide is Large ribosomal subunit protein bL21 (Acetivibrio thermocellus (strain ATCC 27405 / DSM 1237 / JCM 9322 / NBRC 103400 / NCIMB 10682 / NRRL B-4536 / VPI 7372) (Clostridium thermocellum)).